The sequence spans 3163 residues: Genome polyprotein (3163 aa).

The Peptidase S30 domain occupies 219-362 (KMSDQGVDML…KTMSLKIVHF (144 aa)). Active-site for P1 proteinase activity residues include H270, D279, and S313. The Involved in interaction with stylet and aphid transmission signature appears at 414-417 (KITC). The short motif at 672–674 (PTK) is the Involved in virions binding and aphid transmission element. One can recognise a Peptidase C6 domain in the interval 698–820 (MYIAKEGYCY…ESSLKHYRVG (123 aa)). Active-site for helper component proteinase activity residues include C706 and H779. Residues 1300-1452 (KIAHESDKDI…TQYPVSISTE (153 aa)) enclose the Helicase ATP-binding domain. 1313 to 1320 (GAVGSGKS) lines the ATP pocket. A DEAH box motif is present at residues 1402 to 1405 (DECH). Residues 1471–1630 (DVISKGDNIL…GLPVITNNVS (160 aa)) form the Helicase C-terminal domain. At 1871-1888 (STNEMSKFLQLKGKWNKT) the chain is on the cytoplasmic side. The chain crosses the membrane as a helical span at residues 1889-1909 (LITRDVLVICGVLGGGVWMVV). Over 1910–1923 (QHFRSKVSEPVTHE) the chain is Lumenal. The Nuclear localization signal motif lies at 1964 to 1971 (KKGKSKGR). Positions 1983–2017 (INMYGFDPEDFSAVRFVDPLTGATLDDNPFTDITL) are binding to host eIF(iso)4E. Y1986 is subject to O-(5'-phospho-RNA)-tyrosine. The Peptidase C4 domain maps to 2116 to 2334 (SNSMFRGLRD…ISWGSLNIQA (219 aa)). Residues H2161, D2196, and C2266 each act as for nuclear inclusion protein A activity in the active site. The RdRp catalytic domain maps to 2600-2724 (WVYCDADGSQ…SVHPEYEYIL (125 aa)). The disordered stretch occupies residues 2883–2934 (DLTEEQKQAEKEKKEREKAEKERERQKQLAFKKGKDVAQEEGKRDKEVNAGT). Positions 2886–2930 (EEQKQAEKEKKEREKAEKERERQKQLAFKKGKDVAQEEGKRDKEV) are enriched in basic and acidic residues.

The protein belongs to the potyviridae genome polyprotein family. Interacts with host eIF4E protein (via cap-binding region); this interaction mediates the translation of the VPg-viral RNA conjugates. Part of a complex that comprises VPg, RNA, host EIF4E and EIF4G; this interaction mediates the translation of the VPg-viral RNA conjugates. As to quaternary structure, interacts, via N-terminal region, with host Sec24a protein in COPII-coated vesicles. This binding triggers the formation of host endoplasmic reticulum (ER)-derived viral vesicles involved in cell-to-cell viral movement. VPg is uridylylated by the polymerase and is covalently attached to the 5'-end of the genomic RNA. This uridylylated form acts as a nucleotide-peptide primer for the polymerase. Post-translationally, potyviral RNA is expressed as two polyproteins which undergo post-translational proteolytic processing. Genome polyprotein is processed by NIa-pro, P1 and HC-pro proteinases resulting in the production of at least ten individual proteins. P3N-PIPO polyprotein is cleaved by P1 and HC-pro proteinases resulting in the production of three individual proteins. The P1 proteinase and the HC-pro cleave only their respective C-termini autocatalytically. 6K1 is essential for proper proteolytic separation of P3 from CI.

The protein localises to the host cytoplasm. It is found in the host nucleus. Its subcellular location is the host cytoplasmic vesicle. The protein resides in the host membrane. It localises to the virion. The enzyme catalyses RNA(n) + a ribonucleoside 5'-triphosphate = RNA(n+1) + diphosphate. It carries out the reaction Hydrolyzes glutaminyl bonds, and activity is further restricted by preferences for the amino acids in P6 - P1' that vary with the species of potyvirus, e.g. Glu-Xaa-Xaa-Tyr-Xaa-Gln-|-(Ser or Gly) for the enzyme from tobacco etch virus. The natural substrate is the viral polyprotein, but other proteins and oligopeptides containing the appropriate consensus sequence are also cleaved.. The catalysed reaction is Hydrolyzes a Gly-|-Gly bond at its own C-terminus, commonly in the sequence -Tyr-Xaa-Val-Gly-|-Gly, in the processing of the potyviral polyprotein.. Functionally, cysteine protease that cleaves a Gly-Gly dipeptide at its own C-terminus. Required for aphid transmission and also has proteolytic activity. Interacts with virions and aphid stylets. Acts as a suppressor of RNA-mediated gene silencing, also known as post-transcriptional gene silencing (PTGS), a mechanism of plant viral defense that limits the accumulation of viral RNAs. May have RNA-binding activity. In terms of biological role, has helicase activity. It may be involved in replication. Indispensable for virus replication. Its function is as follows. Responsible for the formation of peripheral motile host endoplasmic reticulum (ER)-derived viral vesicles called 'viral factories', seat of the viral RNA (vRNA) replication and carrying vRNA to plasmodesmata for delivery into adjacent non-infected cells; this process relies on host Sec24a-binding. Functionally, mediates the cap-independent, EIF4E-dependent translation of viral genomic RNAs. Binds to the cap-binding site of host EIF4E and thus interferes with the host EIF4E-dependent mRNA export and translation. VPg-RNA directly binds EIF4E and is a template for transcription. Also forms trimeric complexes with EIF4E-EIF4G, which are templates for translation. In terms of biological role, has RNA-binding and proteolytic activities. RNA-dependent RNA polymerase that ensures transcription and replication of viral RNA (vRNA). Its function is as follows. Involved in aphid transmission, cell-to-cell and systemis movement, encapsidation of the viral RNA and in the regulation of viral RNA amplification. The chain is Genome polyprotein from Brassica (TuMV).